A 142-amino-acid chain; its full sequence is Small ribosomal subunit protein uS19 (142 aa).

Ser2 is subject to N-acetylserine. Residues Lys24, Lys35, and Lys64 each participate in a glycyl lysine isopeptide (Lys-Gly) (interchain with G-Cter in ubiquitin) cross-link.

The protein belongs to the universal ribosomal protein uS19 family. As to quaternary structure, component of the small ribosomal subunit (SSU). Mature yeast ribosomes consist of a small (40S) and a large (60S) subunit. The 40S small subunit contains 1 molecule of ribosomal RNA (18S rRNA) and 33 different proteins (encoded by 57 genes). The large 60S subunit contains 3 rRNA molecules (25S, 5.8S and 5S rRNA) and 46 different proteins (encoded by 81 genes).

It localises to the cytoplasm. In terms of biological role, component of the ribosome, a large ribonucleoprotein complex responsible for the synthesis of proteins in the cell. The small ribosomal subunit (SSU) binds messenger RNAs (mRNAs) and translates the encoded message by selecting cognate aminoacyl-transfer RNA (tRNA) molecules. The large subunit (LSU) contains the ribosomal catalytic site termed the peptidyl transferase center (PTC), which catalyzes the formation of peptide bonds, thereby polymerizing the amino acids delivered by tRNAs into a polypeptide chain. The nascent polypeptides leave the ribosome through a tunnel in the LSU and interact with protein factors that function in enzymatic processing, targeting, and the membrane insertion of nascent chains at the exit of the ribosomal tunnel. uS19 is involved in the nuclear export of the small ribosomal subunit precursor. Has a role in the late stage of the assembly of pre-40S particles within the nucleus and controls their export to the cytoplasm. The chain is Small ribosomal subunit protein uS19 from Saccharomyces cerevisiae (strain ATCC 204508 / S288c) (Baker's yeast).